The primary structure comprises 147 residues: Large ribosomal subunit protein uL13 (147 aa).

This sequence belongs to the universal ribosomal protein uL13 family. As to quaternary structure, part of the 50S ribosomal subunit.

Functionally, this protein is one of the early assembly proteins of the 50S ribosomal subunit, although it is not seen to bind rRNA by itself. It is important during the early stages of 50S assembly. The protein is Large ribosomal subunit protein uL13 of Streptomyces griseus subsp. griseus (strain JCM 4626 / CBS 651.72 / NBRC 13350 / KCC S-0626 / ISP 5235).